Here is a 564-residue protein sequence, read N- to C-terminus: Probable metalloprotease ARX1 (564 aa).

The protein belongs to the peptidase M24 family. Component of the nucleoplasmic and cytoplasmic pre-60S ribosomal particles.

The protein resides in the cytoplasm. Its subcellular location is the nucleus. Functionally, probable metalloprotease involved in proper assembly of pre-ribosomal particles during the biogenesis of the 60S ribosomal subunit. Accompanies the pre-60S particles to the cytoplasm. This chain is Probable metalloprotease ARX1 (ARX1), found in Debaryomyces hansenii (strain ATCC 36239 / CBS 767 / BCRC 21394 / JCM 1990 / NBRC 0083 / IGC 2968) (Yeast).